The following is a 182-amino-acid chain: Protein GrpE (182 aa).

The protein belongs to the GrpE family. Homodimer.

The protein resides in the cytoplasm. In terms of biological role, participates actively in the response to hyperosmotic and heat shock by preventing the aggregation of stress-denatured proteins, in association with DnaK and GrpE. It is the nucleotide exchange factor for DnaK and may function as a thermosensor. Unfolded proteins bind initially to DnaJ; upon interaction with the DnaJ-bound protein, DnaK hydrolyzes its bound ATP, resulting in the formation of a stable complex. GrpE releases ADP from DnaK; ATP binding to DnaK triggers the release of the substrate protein, thus completing the reaction cycle. Several rounds of ATP-dependent interactions between DnaJ, DnaK and GrpE are required for fully efficient folding. The polypeptide is Protein GrpE (Aquifex aeolicus (strain VF5)).